The primary structure comprises 185 residues: Ribosome-recycling factor (185 aa).

It belongs to the RRF family.

It is found in the cytoplasm. Responsible for the release of ribosomes from messenger RNA at the termination of protein biosynthesis. May increase the efficiency of translation by recycling ribosomes from one round of translation to another. This chain is Ribosome-recycling factor, found in Methylococcus capsulatus (strain ATCC 33009 / NCIMB 11132 / Bath).